We begin with the raw amino-acid sequence, 430 residues long: Protein translocase subunit SecY (430 aa).

10 helical membrane-spanning segments follow: residues 18–38 (IFFT…PAPG), 68–88 (FSIF…MQLL), 117–137 (FAII…NNYL), 147–167 (VMSY…LIWL), 174–194 (FGVG…TLPS), 217–237 (ILGL…VLEA), 270–290 (VIPV…TLFF), 308–328 (NIGM…YAFV), 368–388 (FVGS…TKFM), and 389–409 (GLPQ…GVAI).

It belongs to the SecY/SEC61-alpha family. Component of the Sec protein translocase complex. Heterotrimer consisting of SecY, SecE and SecG subunits. The heterotrimers can form oligomers, although 1 heterotrimer is thought to be able to translocate proteins. Interacts with the ribosome. Interacts with SecDF, and other proteins may be involved. Interacts with SecA.

It localises to the cell membrane. Its function is as follows. The central subunit of the protein translocation channel SecYEG. Consists of two halves formed by TMs 1-5 and 6-10. These two domains form a lateral gate at the front which open onto the bilayer between TMs 2 and 7, and are clamped together by SecE at the back. The channel is closed by both a pore ring composed of hydrophobic SecY resides and a short helix (helix 2A) on the extracellular side of the membrane which forms a plug. The plug probably moves laterally to allow the channel to open. The ring and the pore may move independently. This Staphylococcus epidermidis (strain ATCC 35984 / DSM 28319 / BCRC 17069 / CCUG 31568 / BM 3577 / RP62A) protein is Protein translocase subunit SecY.